A 350-amino-acid chain; its full sequence is sn-1 oleoyl-lipid 12-desaturase (350 aa).

2 helical membrane-spanning segments follow: residues 41-61 (AWTQ…SLAI) and 64-84 (WFLL…FFVI). The Histidine box-1 motif lies at 86–90 (HDCGH). A helical transmembrane segment spans residues 98 to 118 (WVNDLVGHIFMMPLIYPFHSW). The Histidine box-2 signature appears at 122-126 (HNHHH). 2 helical membrane-spanning segments follow: residues 196–216 (VAVV…TTGI) and 219–239 (FVKF…TFTI). The Histidine box-3 motif lies at 287–291 (HHLST).

It belongs to the fatty acid desaturase type 2 family. It depends on Fe(2+) as a cofactor.

It localises to the membrane. The enzyme catalyses a 1-[(9Z)-octadecenoyl]-2-acyl-glycerolipid + 2 reduced [2Fe-2S]-[ferredoxin] + O2 + 2 H(+) = a 1-[(9Z,12Z)-octadecdienoyl]-2-acyl-glycerolipid + 2 oxidized [2Fe-2S]-[ferredoxin] + 2 H2O. The protein operates within lipid metabolism; polyunsaturated fatty acid biosynthesis. In terms of biological role, desaturase involved in fatty acid biosynthesis. Introduces a double bond at carbon 12 of oleoyl groups (18:1) attached to the sn-1 position of the glycerol moiety of membrane glycerolipids. The chain is sn-1 oleoyl-lipid 12-desaturase from Anabaena variabilis.